The following is a 282-amino-acid chain: ATP synthase gamma chain (282 aa).

It belongs to the ATPase gamma chain family. In terms of assembly, F-type ATPases have 2 components, CF(1) - the catalytic core - and CF(0) - the membrane proton channel. CF(1) has five subunits: alpha(3), beta(3), gamma(1), delta(1), epsilon(1). CF(0) has three main subunits: a, b and c.

The protein localises to the cell membrane. Its function is as follows. Produces ATP from ADP in the presence of a proton gradient across the membrane. The gamma chain is believed to be important in regulating ATPase activity and the flow of protons through the CF(0) complex. The sequence is that of ATP synthase gamma chain from Clostridium botulinum (strain 657 / Type Ba4).